Here is a 513-residue protein sequence, read N- to C-terminus: ATP synthase subunit alpha (513 aa).

Residue 169 to 176 (GDRQTGKT) participates in ATP binding.

This sequence belongs to the ATPase alpha/beta chains family. In terms of assembly, F-type ATPases have 2 components, CF(1) - the catalytic core - and CF(0) - the membrane proton channel. CF(1) has five subunits: alpha(3), beta(3), gamma(1), delta(1), epsilon(1). CF(0) has three main subunits: a(1), b(2) and c(9-12). The alpha and beta chains form an alternating ring which encloses part of the gamma chain. CF(1) is attached to CF(0) by a central stalk formed by the gamma and epsilon chains, while a peripheral stalk is formed by the delta and b chains.

It is found in the cell inner membrane. It catalyses the reaction ATP + H2O + 4 H(+)(in) = ADP + phosphate + 5 H(+)(out). Its function is as follows. Produces ATP from ADP in the presence of a proton gradient across the membrane. The alpha chain is a regulatory subunit. The chain is ATP synthase subunit alpha from Haemophilus ducreyi (strain 35000HP / ATCC 700724).